A 210-amino-acid chain; its full sequence is Late histone H1 (210 aa).

Disordered regions lie at residues 1–21 (MSAA…HPPT) and 86–210 (SFKL…AAKK). The H15 domain maps to 17–91 (AHPPTSQMVV…GASGSFKLGK (75 aa)). Residues 104–113 (AAAKKAKLAA) show a composition bias toward basic residues. Positions 114 to 123 (KKKEQKEKKA) are enriched in basic and acidic residues. Over residues 124–210 (AKTKARKEKL…KPAAKKAAKK (87 aa)) the composition is skewed to basic residues.

This sequence belongs to the histone H1/H5 family.

Its subcellular location is the nucleus. It is found in the chromosome. Histones H1 are necessary for the condensation of nucleosome chains into higher-order structures. This chain is Late histone H1, found in Lytechinus pictus (Painted sea urchin).